A 388-amino-acid polypeptide reads, in one-letter code: Succinate--CoA ligase [ADP-forming] subunit beta (388 aa).

The region spanning 9–244 is the ATP-grasp domain; the sequence is KQLFARYGLP…QSQEDPREAQ (236 aa). ATP contacts are provided by residues Lys-46, 53-55, Glu-99, Thr-102, and Glu-107; that span reads GRG. 2 residues coordinate Mg(2+): Asn-199 and Asp-213. Substrate contacts are provided by residues Asn-264 and 321-323; that span reads GIV.

This sequence belongs to the succinate/malate CoA ligase beta subunit family. Heterotetramer of two alpha and two beta subunits. The cofactor is Mg(2+).

The enzyme catalyses succinate + ATP + CoA = succinyl-CoA + ADP + phosphate. It carries out the reaction GTP + succinate + CoA = succinyl-CoA + GDP + phosphate. Its pathway is carbohydrate metabolism; tricarboxylic acid cycle; succinate from succinyl-CoA (ligase route): step 1/1. Its function is as follows. Succinyl-CoA synthetase functions in the citric acid cycle (TCA), coupling the hydrolysis of succinyl-CoA to the synthesis of either ATP or GTP and thus represents the only step of substrate-level phosphorylation in the TCA. The beta subunit provides nucleotide specificity of the enzyme and binds the substrate succinate, while the binding sites for coenzyme A and phosphate are found in the alpha subunit. The chain is Succinate--CoA ligase [ADP-forming] subunit beta from Shigella dysenteriae serotype 1 (strain Sd197).